A 131-amino-acid polypeptide reads, in one-letter code: Fumarate reductase subunit C (131 aa).

A run of 3 helical transmembrane segments spans residues 30–50 (EGTAVPAVWFSIELIFGLFAL), 57–77 (WMGFVGFLQNPVVVILNLITL), and 109–129 (IIKGLWVVTAVVTVVILYVAL).

It belongs to the FrdC family. As to quaternary structure, part of an enzyme complex containing four subunits: a flavoprotein (FrdA), an iron-sulfur protein (FrdB), and two hydrophobic anchor proteins (FrdC and FrdD).

It localises to the cell inner membrane. Functionally, two distinct, membrane-bound, FAD-containing enzymes are responsible for the catalysis of fumarate and succinate interconversion; fumarate reductase is used in anaerobic growth, and succinate dehydrogenase is used in aerobic growth. Anchors the catalytic components of the fumarate reductase complex to the cell inner membrane, binds quinones. The protein is Fumarate reductase subunit C of Salmonella choleraesuis (strain SC-B67).